A 502-amino-acid polypeptide reads, in one-letter code: Regulator of hypoxia-inducible factor 1 (502 aa).

11 helical membrane-spanning segments follow: residues 54 to 74 (LLAW…VFSC), 92 to 112 (LDVL…NHTG), 138 to 158 (IFGA…VLSG), 188 to 208 (LAPS…NALL), 241 to 261 (MGYL…PIFL), 272 to 292 (MALT…YCTA), 335 to 355 (GPFL…YIMV), 367 to 387 (LIVA…PNAG), 396 to 416 (TAVF…ALYF), 437 to 457 (AYLL…LQAA), and 465 to 485 (LVLP…YLFI).

Expressed in intestine, some sensory neurons in the head, body wall muscles and socket cells.

The protein resides in the endoplasmic reticulum membrane. Functionally, involved in the response to variation in environmental oxygen levels by inhibiting hif-1-mediated gene transcription in a vhl-1-independent manner. Plays a role in susceptibility to killing mediated by P.aeruginosa and by pore-forming toxins produced by B.thuringiensis. Probably by preventing hif-1 transcriptional activity, regulates behavioral responses, such as locomotion speed following acute reoxygenation. Plays a role in normal egg-laying probably by regulating spermatogenesis and in body morphogenesis. The chain is Regulator of hypoxia-inducible factor 1 from Caenorhabditis elegans.